The chain runs to 622 residues: Peptidoglycan O-acetyltransferase OatA (622 aa).

Helical transmembrane passes span 11 to 31 (YVPSIDGLRALAVIAVIAYHL), 39 to 59 (GFIGVDIFFVLSGYLITNILL), 81 to 101 (LIPAVYVMIVVVVIYSVFFHP), 143 to 163 (LWSLAIEEQFYLIWPAFLLVF), 173 to 193 (LLKIVIGLGLLSAVWMTILYV), 212 to 232 (LLSGCALAFVWPFNRLSPVVP), 237 to 257 (AVLNIAGTISILCFILFTAFV), 267 to 287 (GGLLFVAILGVIMIATISHPA), 307 to 327 (YGIYLWHYPIITLTTPVLEIT), 334 to 354 (AILQVAATFIIAELSFRFIET), and 387 to 407 (IAGVVAVLAIFTLGMSNVLSV). The interval 412-467 (EKQQTSVKTTTSTPDEKKDDKKEDKATKDKEADSNKASEQKETQKPDNKNKSAATP) is disordered. A compositionally biased stretch (low complexity) spans 413-424 (KQQTSVKTTTST). Over residues 425–461 (PDEKKDDKKEDKATKDKEADSNKASEQKETQKPDNKN) the composition is skewed to basic and acidic residues. Residues serine 480, aspartate 600, and histidine 603 contribute to the active site.

The protein belongs to the acyltransferase 3 family.

Its subcellular location is the cell membrane. It is found in the secreted. The protein localises to the cell wall. In terms of biological role, responsible for O-acetylation at the C6-hydroxyl group of N-acetylmuramyl residues, forming the corresponding N,6-O-diacetylmuramic acid of the peptidoglycan. O-acetylation of the peptidoglycan is the major determinant for lysozyme resistance. Critical for virulence and escape from innate immune response of the host. Involved at both early and later stages of listeriosis in the mouse model of infection. Required for successful host colonization and for intracellular survival of bacteria in macrophages of the infected host. Controls the production of inflammatory mediators in the liver of the infected host. Confers resistance to host antimicrobial molecules and to cell wall-targeting molecules such as beta-lactam antibiotics and bacteriocins. The sequence is that of Peptidoglycan O-acetyltransferase OatA from Listeria monocytogenes serovar 1/2a (strain ATCC BAA-679 / EGD-e).